A 453-amino-acid chain; its full sequence is Ribosomal protein uS12 methylthiotransferase RimO (453 aa).

Residues 3-118 form the MTTase N-terminal domain; sequence KKVGIISLGC…IAKVIEEFYS (116 aa). Residues Cys12, Cys48, Cys81, Cys162, Cys166, and Cys169 each contribute to the [4Fe-4S] cluster site. Residues 148–378 form the Radical SAM core domain; the sequence is STNSGYAYLK…MQLQKEIVQR (231 aa). One can recognise a TRAM domain in the interval 381 to 449; that stretch reads ESRLEKVYKT…DYDLIGEVIN (69 aa).

Belongs to the methylthiotransferase family. RimO subfamily. [4Fe-4S] cluster serves as cofactor.

The protein localises to the cytoplasm. It carries out the reaction L-aspartate(89)-[ribosomal protein uS12]-hydrogen + (sulfur carrier)-SH + AH2 + 2 S-adenosyl-L-methionine = 3-methylsulfanyl-L-aspartate(89)-[ribosomal protein uS12]-hydrogen + (sulfur carrier)-H + 5'-deoxyadenosine + L-methionine + A + S-adenosyl-L-homocysteine + 2 H(+). Its function is as follows. Catalyzes the methylthiolation of an aspartic acid residue of ribosomal protein uS12. The protein is Ribosomal protein uS12 methylthiotransferase RimO of Acetivibrio thermocellus (strain ATCC 27405 / DSM 1237 / JCM 9322 / NBRC 103400 / NCIMB 10682 / NRRL B-4536 / VPI 7372) (Clostridium thermocellum).